A 256-amino-acid polypeptide reads, in one-letter code: Thiazole synthase (256 aa).

Lys97 functions as the Schiff-base intermediate with DXP in the catalytic mechanism. 1-deoxy-D-xylulose 5-phosphate-binding positions include Gly158, 184-185 (AG), and 206-207 (NT).

Belongs to the ThiG family. As to quaternary structure, homotetramer. Forms heterodimers with either ThiH or ThiS.

It localises to the cytoplasm. It catalyses the reaction [ThiS sulfur-carrier protein]-C-terminal-Gly-aminoethanethioate + 2-iminoacetate + 1-deoxy-D-xylulose 5-phosphate = [ThiS sulfur-carrier protein]-C-terminal Gly-Gly + 2-[(2R,5Z)-2-carboxy-4-methylthiazol-5(2H)-ylidene]ethyl phosphate + 2 H2O + H(+). It functions in the pathway cofactor biosynthesis; thiamine diphosphate biosynthesis. Catalyzes the rearrangement of 1-deoxy-D-xylulose 5-phosphate (DXP) to produce the thiazole phosphate moiety of thiamine. Sulfur is provided by the thiocarboxylate moiety of the carrier protein ThiS. In vitro, sulfur can be provided by H(2)S. The sequence is that of Thiazole synthase from Flavobacterium psychrophilum (strain ATCC 49511 / DSM 21280 / CIP 103535 / JIP02/86).